Reading from the N-terminus, the 129-residue chain is uncharacterized protein (129 aa).

The tract at residues 1 to 129 (MWLWQDIQCC…HTSNGRTGDL (129 aa)) is disordered. A compositionally biased stretch (basic and acidic residues) spans 87–100 (KGADTRRLPRETRP). Polar residues predominate over residues 119–129 (PHTSNGRTGDL).

This is an uncharacterized protein from Homo sapiens (Human).